A 247-amino-acid polypeptide reads, in one-letter code: 5-hydroxytryptamine receptor 2A (247 aa).

Lysine 1 is a topological domain (extracellular). The chain crosses the membrane as a helical span at residues 2-26 (LCAIWIYLDVLFSTASIMHLCAISL). A disulfide bridge links cysteine 3 with cysteine 82. Aspartate 10 contributes to the serotonin binding site. A DRY motif; important for ligand-induced conformation changes motif is present at residues 27 to 29 (DRY). Topologically, residues 27–46 (DRYVAIQNPIHHSRFNSRTK) are cytoplasmic. A helical transmembrane segment spans residues 47–70 (AFLKIIAVWTISVGISMPVPVFGL). The Extracellular segment spans residues 71–87 (QDDSKVFKEGSCLLADD). A helical membrane pass occupies residues 88-113 (NFVLIGSFVAFFIPLTIMVITYFLTI). The Cytoplasmic portion of the chain corresponds to 114 to 177 (KSLQKEATLC…QSISNEQKAC (64 aa)). Serine 135 bears the Phosphoserine mark. A helical transmembrane segment spans residues 178–203 (KVLGIVFFLFVVMWCPFFVTNIMAVI). Asparagine 198 serves as a coordination point for serotonin. A disulfide bridge connects residues cysteine 204 and cysteine 208. The Extracellular segment spans residues 204–211 (CKESCNED). A helical transmembrane segment spans residues 212–237 (VIGALLNVFVWIGYLSSAVNPLVYTL). Residues 231–235 (NPLVY) carry the NPxxY motif; important for ligand-induced conformation changes and signaling motif. The Cytoplasmic segment spans residues 238–247 (FNKTYRSAFA).

The protein belongs to the G-protein coupled receptor 1 family. As to quaternary structure, interacts (via C-terminus) with MPDZ and PATJ. May interact (via C-terminus) with MPP3, PRDX6, DLG4, DLG1, CASK, APBA1 and MAGI2. Interacts with GRM2 and DRD2; this may affect signaling. In terms of tissue distribution, detected in adult intestine, especially in mucosal epithelium, longitudinal and circular layers of muscularis externa and myenteric plexuses. Highly expressed in Paneth cells, and detected at lower levels in enterocytes (at protein level).

The protein localises to the cell membrane. It is found in the cell projection. The protein resides in the dendrite. Its subcellular location is the axon. It localises to the cytoplasmic vesicle. The protein localises to the membrane. It is found in the caveola. The protein resides in the presynapse. With respect to regulation, G-protein coupled receptor activity is regulated by lipids: oleamide increases HTR2A-mediated activity. Its function is as follows. G-protein coupled receptor for 5-hydroxytryptamine (serotonin). Also functions as a receptor for various drugs and psychoactive substances, including mescaline, psilocybin, 1-(2,5-dimethoxy-4-iodophenyl)-2-aminopropane (DOI) and lysergic acid diethylamide (LSD). Ligand binding causes a conformation change that triggers signaling via guanine nucleotide-binding proteins (G proteins) and modulates the activity of downstream effectors. HTR2A is coupled to G(q)/G(11) G alpha proteins and activates phospholipase C-beta, releasing diacylglycerol (DAG) and inositol 1,4,5-trisphosphate (IP3) second messengers that modulate the activity of phosphatidylinositol 3-kinase and promote the release of Ca(2+) ions from intracellular stores, respectively. Beta-arrestin family members inhibit signaling via G proteins and mediate activation of alternative signaling pathways. Affects neural activity, perception, cognition and mood. Plays a role in the regulation of behavior, including responses to anxiogenic situations and psychoactive substances. Plays a role in intestinal smooth muscle contraction, and may play a role in arterial vasoconstriction. This is 5-hydroxytryptamine receptor 2A (HTR2A) from Cavia porcellus (Guinea pig).